A 447-amino-acid chain; its full sequence is UDP-N-acetylmuramate--L-alanine ligase (447 aa).

An ATP-binding site is contributed by 107 to 113 (GTHGKTT).

It belongs to the MurCDEF family.

Its subcellular location is the cytoplasm. The enzyme catalyses UDP-N-acetyl-alpha-D-muramate + L-alanine + ATP = UDP-N-acetyl-alpha-D-muramoyl-L-alanine + ADP + phosphate + H(+). It participates in cell wall biogenesis; peptidoglycan biosynthesis. Its function is as follows. Cell wall formation. This is UDP-N-acetylmuramate--L-alanine ligase from Rubrobacter xylanophilus (strain DSM 9941 / JCM 11954 / NBRC 16129 / PRD-1).